Reading from the N-terminus, the 445-residue chain is Homoserine O-succinyltransferase (445 aa).

The AB hydrolase-1 domain maps to 45–411 (NAVLICHALS…APHGHDSFLF (367 aa)). The active-site Nucleophile is the Ser-153. Arg-223 lines the substrate pocket. Catalysis depends on residues Asp-373 and His-406. Asp-407 is a substrate binding site.

It belongs to the AB hydrolase superfamily. MetX family. In terms of assembly, homodimer.

The protein resides in the cytoplasm. It carries out the reaction L-homoserine + succinyl-CoA = O-succinyl-L-homoserine + CoA. It functions in the pathway amino-acid biosynthesis; L-methionine biosynthesis via de novo pathway; O-succinyl-L-homoserine from L-homoserine: step 1/1. In terms of biological role, transfers a succinyl group from succinyl-CoA to L-homoserine, forming succinyl-L-homoserine. The polypeptide is Homoserine O-succinyltransferase (Psychrobacter arcticus (strain DSM 17307 / VKM B-2377 / 273-4)).